Consider the following 342-residue polypeptide: Anthranilate phosphoribosyltransferase (342 aa).

Residues Gly-83, 86–87 (GD), Thr-91, 93–96 (NIST), 111–119 (KHGGRSVSS), and Ala-123 contribute to the 5-phospho-alpha-D-ribose 1-diphosphate site. Gly-83 serves as a coordination point for anthranilate. Mg(2+) is bound at residue Ser-95. Anthranilate is bound at residue Arg-169. Residues Asp-228 and Glu-229 each coordinate Mg(2+).

It belongs to the anthranilate phosphoribosyltransferase family. As to quaternary structure, homodimer. The cofactor is Mg(2+).

It catalyses the reaction N-(5-phospho-beta-D-ribosyl)anthranilate + diphosphate = 5-phospho-alpha-D-ribose 1-diphosphate + anthranilate. The protein operates within amino-acid biosynthesis; L-tryptophan biosynthesis; L-tryptophan from chorismate: step 2/5. Functionally, catalyzes the transfer of the phosphoribosyl group of 5-phosphorylribose-1-pyrophosphate (PRPP) to anthranilate to yield N-(5'-phosphoribosyl)-anthranilate (PRA). In Neisseria gonorrhoeae (strain ATCC 700825 / FA 1090), this protein is Anthranilate phosphoribosyltransferase.